The chain runs to 536 residues: Arylsulfatase K (536 aa).

Positions 1–22 (MLLLWVSVVAALALAVLAPGAG) are cleaved as a signal peptide. Positions 40 and 80 each coordinate Ca(2+). The Nucleophile role is filled by Cys80. Residue Cys80 is modified to 3-oxoalanine (Cys). An N-linked (GlcNAc...) asparagine glycan is attached at Asn108. Substrate is bound at residue Lys128. N-linked (GlcNAc...) asparagine glycans are attached at residues Asn166 and Asn193. A substrate-binding site is contributed by His251. Residue Asn262 is glycosylated (N-linked (GlcNAc...) asparagine). Ca(2+) contacts are provided by Asp313 and His314. 3 N-linked (GlcNAc...) asparagine glycosylation sites follow: Asn375, Asn413, and Asn498.

This sequence belongs to the sulfatase family. Ca(2+) is required as a cofactor. Post-translationally, the conversion to 3-oxoalanine (also known as C-formylglycine, FGly), of a serine or cysteine residue in prokaryotes and of a cysteine residue in eukaryotes, is critical for catalytic activity. The 75-kDa precursor undergoes proteolytic processing to yield a 23 kDa form. In terms of processing, N-glycosylated with both high mannose and complex type sugars. As to expression, expressed at high levels in the placenta and pancreas. Expressed at intermediate levels in the lung, brain, heart, liver and kidney and at low levels in the muscle.

It localises to the secreted. Its subcellular location is the lysosome. It catalyses the reaction an aryl sulfate + H2O = a phenol + sulfate + H(+). The enzyme catalyses Hydrolysis of the 2-sulfate groups of the 2-O-sulfo-D-glucuronate residues of chondroitin sulfate, heparin and heparitin sulfate.. Catalyzes the hydrolysis of pseudosubstrates such as p-nitrocatechol sulfate and p-nitrophenyl sulfate. Catalyzes the hydrolysis of the 2-sulfate groups of the 2-O-sulfo-D-glucuronate residues of chondroitin sulfate, heparin and heparitin sulfate. Acts selectively on 2-sulfoglucuronate and lacks activity against 2-sulfoiduronate. This chain is Arylsulfatase K (ARSK), found in Homo sapiens (Human).